The sequence spans 1172 residues: Protein diaphanous homolog 3 (1172 aa).

Residues 1–15 (MEKHRARALGRDSKA) are compositionally biased toward basic and acidic residues. Residues 1–36 (MEKHRARALGRDSKASRRKGLPSAPPAGPYELGEKR) form a disordered region. The Nuclear localization signal motif lies at 16 to 39 (SRRKGLPSAPPAGPYELGEKRPKL). T47 carries the phosphothreonine modification. Residue S56 is modified to Phosphoserine. Residues 57 to 96 (IRIPKGSKKERPPLPQLKTVSGSSDYSSVSSETMENNPKS) form a disordered region. Residues 77-87 (SGSSDYSSVSS) show a composition bias toward low complexity. One can recognise a GBD/FH3 domain in the interval 94–456 (PKSLSENEVL…QIVLHRDGID (363 aa)). S155 bears the Phosphoserine mark. The stretch at 493 to 530 (CKKFEKECTDHQETQAQLQKKEAKINELQAELQAFKSQ) forms a coiled coil. Positions 535 to 586 (PPGTKIPLQTSAKGEPGPSAFPPAPPALGAGVPPPPPPPPPPPPPLPGMAMP) are disordered. One can recognise an FH1 domain in the interval 541-611 (PLQTSAKGEP…GQNFIPLNLP (71 aa)). Pro residues predominate over residues 553–581 (SAFPPAPPALGAGVPPPPPPPPPPPPPLP). The FH2 domain occupies 616–1014 (PKKEFKPEIS…EKRARIAKER (399 aa)). The 31-residue stretch at 1037–1067 (DETGVMDSLLEALQSGAAFRDRRKRTPKLKD) folds into the DAD domain. Residues S1073 and S1158 each carry the phosphoserine modification. The Nuclear export signal signature appears at 1163–1172 (EALLARLRAL).

The protein belongs to the formin homology family. Diaphanous subfamily. In terms of processing, ubiquitinated. In terms of tissue distribution, expressed in testis. Present in Sertoli cells (at protein level).

Its subcellular location is the cytoplasm. The protein localises to the nucleus. In terms of biological role, actin nucleation and elongation factor required for the assembly of F-actin structures, such as actin cables and stress fibers. Required for cytokinesis, stress fiber formation and transcriptional activation of the serum response factor. Binds to GTP-bound form of Rho and to profilin: acts in a Rho-dependent manner to recruit profilin to the membrane, where it promotes actin polymerization. DFR proteins couple Rho and Src tyrosine kinase during signaling and the regulation of actin dynamics. Also acts as an actin nucleation and elongation factor in the nucleus by promoting nuclear actin polymerization inside the nucleus to drive serum-dependent SRF-MRTFA activity. In Rattus norvegicus (Rat), this protein is Protein diaphanous homolog 3.